An 89-amino-acid chain; its full sequence is Small ribosomal subunit protein uS17A (89 aa).

It belongs to the universal ribosomal protein uS17 family. As to quaternary structure, part of the 30S ribosomal subunit.

Its function is as follows. One of the primary rRNA binding proteins, it binds specifically to the 5'-end of 16S ribosomal RNA. The chain is Small ribosomal subunit protein uS17A from Bacteroides thetaiotaomicron (strain ATCC 29148 / DSM 2079 / JCM 5827 / CCUG 10774 / NCTC 10582 / VPI-5482 / E50).